A 323-amino-acid chain; its full sequence is MLRTVDLSGRSVAVKVPATSANLGPGFDTLGLALAQYDELRVSVRPEPGATVVVRGIGEGEVPTDETNLVVRAIAHTFESVGVELPGLSLVARNSIPHGRGMGSSGAAIVSGIMAAKGLLQGVADIDAQGLLALANDMEGHPDNVAPALFGGLTIAWVTPDGPRFKKLIVHRGVSPLVLVPERVMSTALARSLQPASVPHEDAVFNVSRSALLVAALIQSPELLHAATEDKLHQSYRASAMPETDRLITLLRTNGFAAVVSGAGPSILVLCSDPGQRLAAARLVATQGAAAWQPLMLAVDFKGATVPRIAEDAVSGEGDTTAV.

Pro-97–Ala-107 lines the ATP pocket.

This sequence belongs to the GHMP kinase family. Homoserine kinase subfamily.

The protein localises to the cytoplasm. It carries out the reaction L-homoserine + ATP = O-phospho-L-homoserine + ADP + H(+). Its pathway is amino-acid biosynthesis; L-threonine biosynthesis; L-threonine from L-aspartate: step 4/5. In terms of biological role, catalyzes the ATP-dependent phosphorylation of L-homoserine to L-homoserine phosphate. The chain is Homoserine kinase from Leifsonia xyli subsp. xyli (strain CTCB07).